The following is a 294-amino-acid chain: Urease accessory protein UreD 1 (294 aa).

Residues 1–22 are disordered; sequence MALSLDGLPEKPAPAEAPSPPV. A compositionally biased stretch (pro residues) spans 11-21; that stretch reads KPAPAEAPSPP.

This sequence belongs to the UreD family. As to quaternary structure, ureD, UreF and UreG form a complex that acts as a GTP-hydrolysis-dependent molecular chaperone, activating the urease apoprotein by helping to assemble the nickel containing metallocenter of UreC. The UreE protein probably delivers the nickel.

The protein resides in the cytoplasm. In terms of biological role, required for maturation of urease via the functional incorporation of the urease nickel metallocenter. The sequence is that of Urease accessory protein UreD 1 from Methylorubrum extorquens (strain PA1) (Methylobacterium extorquens).